A 136-amino-acid chain; its full sequence is Large ribosomal subunit protein bL17 (136 aa).

Belongs to the bacterial ribosomal protein bL17 family. In terms of assembly, part of the 50S ribosomal subunit. Contacts protein L32.

In Rickettsia canadensis (strain McKiel), this protein is Large ribosomal subunit protein bL17.